We begin with the raw amino-acid sequence, 517 residues long: tRNA-2-methylthio-N(6)-dimethylallyladenosine synthase (517 aa).

One can recognise an MTTase N-terminal domain in the interval 18-137 (RTYQVRTYGC…LPTLLDRARH (120 aa)). Cysteine 27, cysteine 66, cysteine 100, cysteine 174, cysteine 178, and cysteine 181 together coordinate [4Fe-4S] cluster. A Radical SAM core domain is found at 160 to 397 (RESDYAAWVS…ELQEQICMEE (238 aa)). One can recognise a TRAM domain in the interval 399 to 470 (RVLIGRIVEL…PHHLIADAGI (72 aa)).

The protein belongs to the methylthiotransferase family. MiaB subfamily. In terms of assembly, monomer. Requires [4Fe-4S] cluster as cofactor.

The protein resides in the cytoplasm. The enzyme catalyses N(6)-dimethylallyladenosine(37) in tRNA + (sulfur carrier)-SH + AH2 + 2 S-adenosyl-L-methionine = 2-methylsulfanyl-N(6)-dimethylallyladenosine(37) in tRNA + (sulfur carrier)-H + 5'-deoxyadenosine + L-methionine + A + S-adenosyl-L-homocysteine + 2 H(+). In terms of biological role, catalyzes the methylthiolation of N6-(dimethylallyl)adenosine (i(6)A), leading to the formation of 2-methylthio-N6-(dimethylallyl)adenosine (ms(2)i(6)A) at position 37 in tRNAs that read codons beginning with uridine. This is tRNA-2-methylthio-N(6)-dimethylallyladenosine synthase from Mycobacterium leprae (strain TN).